Consider the following 239-residue polypeptide: Ribonuclease PH (239 aa).

Residues Arg-86 and 124–126 (GTR) each bind phosphate.

This sequence belongs to the RNase PH family. Homohexameric ring arranged as a trimer of dimers.

The enzyme catalyses tRNA(n+1) + phosphate = tRNA(n) + a ribonucleoside 5'-diphosphate. Its function is as follows. Phosphorolytic 3'-5' exoribonuclease that plays an important role in tRNA 3'-end maturation. Removes nucleotide residues following the 3'-CCA terminus of tRNAs; can also add nucleotides to the ends of RNA molecules by using nucleoside diphosphates as substrates, but this may not be physiologically important. Probably plays a role in initiation of 16S rRNA degradation (leading to ribosome degradation) during starvation. This is Ribonuclease PH from Rickettsia felis (strain ATCC VR-1525 / URRWXCal2) (Rickettsia azadi).